Consider the following 134-residue polypeptide: MTKPIEGVVIGFDFGLKRIGVAIGQTITRTATPEAIVASKDGKPDWEHISRLFEEWKPSAIVVGLPMRLNGEEQALTQPARKFGQRLSGRYQRPVYYIEEQLSSIEAEQRKTKTDQPMDDHAAQIILENWLDAL.

It belongs to the YqgF nuclease family.

Its subcellular location is the cytoplasm. In terms of biological role, could be a nuclease involved in processing of the 5'-end of pre-16S rRNA. The sequence is that of Putative pre-16S rRNA nuclease from Hydrogenovibrio crunogenus (strain DSM 25203 / XCL-2) (Thiomicrospira crunogena).